Here is a 577-residue protein sequence, read N- to C-terminus: Cleavage stimulation factor subunit 2 (577 aa).

Position 14 is a phosphoserine (Ser-14). The 79-residue stretch at 16-94 (RSVFVGNIPY…RALRVDNAAS (79 aa)) folds into the RRM domain. The interval 108–248 (APVIESPYGE…VNGAPPLMQA (141 aa)) is interactions with CSTF3 and SYMPK. Lys-189 is covalently cross-linked (Glycyl lysine isopeptide (Lys-Gly) (interchain with G-Cter in SUMO2)). A disordered region spans residues 207–230 (PVHGAGPGSGSNVSMNQQNPQAPQ). Arg-308 carries the post-translational modification Omega-N-methylarginine. The disordered stretch occupies residues 319–409 (RGLLGDAPND…DGRGGRDPRG (91 aa)). A compositionally biased stretch (basic and acidic residues) spans 360–373 (PGHESRGPPPHELR). A 1; approximate repeat occupies 410-414 (IDARG). The tract at residues 410–469 (IDARGMEARAMEARGLDARGLEARAMEARAMEARAMEARAMEARAMEVRGMEARGMDTRG) is 12 X 5 AA tandem repeats of M-E-A-R-[AG]. 2 tandem repeats follow at residues 415–419 (MEARA) and 420–424 (MEARG). Residues 425 to 429 (LDARG) form a 4; approximate repeat. Residues 430–434 (LEARA) form a 5; approximate repeat. 4 tandem repeats follow at residues 435 to 439 (MEARA), 440 to 444 (MEARA), 445 to 449 (MEARA), and 450 to 454 (MEARA). One copy of the 10; approximate repeat lies at 455–459 (MEVRG). Residues 460–464 (MEARG) form repeat 11. A 12; approximate repeat occupies 465–469 (MDTRG). An omega-N-methylarginine mark is found at Arg-468 and Arg-475. A disordered region spans residues 509-532 (LQGASIQGGSQPGGFSPGQNQVTP). Residues 514 to 577 (IQGGSQPGGF…EQIQKSTGAP (64 aa)) form an interaction with RPO2TC1 region. Phosphoserine is present on residues Ser-518 and Ser-524.

As to quaternary structure, the CSTF complex is composed of CSTF1 (50 kDa subunit), CSTF2 (64 kDa subunit) and CSTF3 (77 kDa subunit). CSTF2 directly interacts with CSTF3, SYMPK and RPO2TC1. Interacts with HSF1 in heat-stressed cells. Interacts with CPSF2, CPSF3 and FIP1L1. Interacts with DDX1.

It localises to the nucleus. Its function is as follows. One of the multiple factors required for polyadenylation and 3'-end cleavage of mammalian pre-mRNAs. This subunit is directly involved in the binding to pre-mRNAs. The sequence is that of Cleavage stimulation factor subunit 2 (CSTF2) from Pongo abelii (Sumatran orangutan).